We begin with the raw amino-acid sequence, 461 residues long: Bifunctional protein GlmU (461 aa).

The segment at 1 to 229 (MNKYVVILAA…FSESLGVNDR (229 aa)) is pyrophosphorylase. Residues 8-11 (LAAG), Lys-22, Gln-72, and 77-78 (GT) each bind UDP-N-acetyl-alpha-D-glucosamine. Residue Asp-102 participates in Mg(2+) binding. UDP-N-acetyl-alpha-D-glucosamine is bound by residues Gly-139, Glu-154, Asn-169, and Asn-227. Asn-227 contributes to the Mg(2+) binding site. A linker region spans residues 230 to 250 (IALAQATKIMQRRINEEHMRN). The interval 251-461 (GVSFIDPDTA…LPLAKDKEWE (211 aa)) is N-acetyltransferase. 2 residues coordinate UDP-N-acetyl-alpha-D-glucosamine: Arg-332 and Lys-350. His-362 serves as the catalytic Proton acceptor. Residues Tyr-365 and Asn-376 each coordinate UDP-N-acetyl-alpha-D-glucosamine. Acetyl-CoA-binding positions include 385 to 386 (NY), Ala-422, and Arg-439.

In the N-terminal section; belongs to the N-acetylglucosamine-1-phosphate uridyltransferase family. The protein in the C-terminal section; belongs to the transferase hexapeptide repeat family. In terms of assembly, homotrimer. It depends on Mg(2+) as a cofactor.

It is found in the cytoplasm. The enzyme catalyses alpha-D-glucosamine 1-phosphate + acetyl-CoA = N-acetyl-alpha-D-glucosamine 1-phosphate + CoA + H(+). It carries out the reaction N-acetyl-alpha-D-glucosamine 1-phosphate + UTP + H(+) = UDP-N-acetyl-alpha-D-glucosamine + diphosphate. It participates in nucleotide-sugar biosynthesis; UDP-N-acetyl-alpha-D-glucosamine biosynthesis; N-acetyl-alpha-D-glucosamine 1-phosphate from alpha-D-glucosamine 6-phosphate (route II): step 2/2. The protein operates within nucleotide-sugar biosynthesis; UDP-N-acetyl-alpha-D-glucosamine biosynthesis; UDP-N-acetyl-alpha-D-glucosamine from N-acetyl-alpha-D-glucosamine 1-phosphate: step 1/1. Its pathway is bacterial outer membrane biogenesis; LPS lipid A biosynthesis. Its function is as follows. Catalyzes the last two sequential reactions in the de novo biosynthetic pathway for UDP-N-acetylglucosamine (UDP-GlcNAc). The C-terminal domain catalyzes the transfer of acetyl group from acetyl coenzyme A to glucosamine-1-phosphate (GlcN-1-P) to produce N-acetylglucosamine-1-phosphate (GlcNAc-1-P), which is converted into UDP-GlcNAc by the transfer of uridine 5-monophosphate (from uridine 5-triphosphate), a reaction catalyzed by the N-terminal domain. The polypeptide is Bifunctional protein GlmU (Lactobacillus johnsonii (strain CNCM I-12250 / La1 / NCC 533)).